The sequence spans 307 residues: Potassium channel subfamily K member 7 (307 aa).

Residues 1–10 (MGGLRPWSRY) are Cytoplasmic-facing. A helical membrane pass occupies residues 11-31 (GLLVVAHLLALGLGAVVFQAL). A glycan (N-linked (GlcNAc...) asparagine) is linked at asparagine 83. Positions 92–119 (LPSALLFAASILTTTGYGHMAPLSPGGK) form an intramembrane region, pore-forming. A helical transmembrane segment spans residues 120 to 140 (AFCMVYAALGLPASLALVATL). Over 141–170 (RHCLLPVLSRPRAWVAVHWQLSPARAALLQ) the chain is Cytoplasmic. A helical membrane pass occupies residues 171–191 (AVALGLLVASSFVLLPALVLW). An intramembrane region (pore-forming) is located at residues 199–227 (LLGAVYFCFSSLSTIGLEDLLPGRGRSLH). Residues 233-253 (LGQLALLGYLLLGLLAMLLAV) traverse the membrane as a helical segment. At 254–307 (ETFSELPQVRAMGKFFRPSGPVTAEDQGGILGQDELALSTLPPAAPASGQAPAC) the chain is on the cytoplasmic side.

This sequence belongs to the two pore domain potassium channel (TC 1.A.1.8) family. As to quaternary structure, homodimer.

It localises to the membrane. Probable potassium channel subunit. No channel activity observed in vitro as protein remains in the endoplasmic reticulum. May need to associate with an as yet unknown partner in order to reach the plasma membrane. This chain is Potassium channel subfamily K member 7 (KCNK7), found in Homo sapiens (Human).